The following is a 97-amino-acid chain: Aspartyl/glutamyl-tRNA(Asn/Gln) amidotransferase subunit C (97 aa).

This sequence belongs to the GatC family. Heterotrimer of A, B and C subunits.

The catalysed reaction is L-glutamyl-tRNA(Gln) + L-glutamine + ATP + H2O = L-glutaminyl-tRNA(Gln) + L-glutamate + ADP + phosphate + H(+). It carries out the reaction L-aspartyl-tRNA(Asn) + L-glutamine + ATP + H2O = L-asparaginyl-tRNA(Asn) + L-glutamate + ADP + phosphate + 2 H(+). Its function is as follows. Allows the formation of correctly charged Asn-tRNA(Asn) or Gln-tRNA(Gln) through the transamidation of misacylated Asp-tRNA(Asn) or Glu-tRNA(Gln) in organisms which lack either or both of asparaginyl-tRNA or glutaminyl-tRNA synthetases. The reaction takes place in the presence of glutamine and ATP through an activated phospho-Asp-tRNA(Asn) or phospho-Glu-tRNA(Gln). In Anaeromyxobacter sp. (strain K), this protein is Aspartyl/glutamyl-tRNA(Asn/Gln) amidotransferase subunit C.